A 314-amino-acid chain; its full sequence is MPSKKNGRSGPQPHKRWVFTLNNPSEDERKKIREPPISLFDYFIVGEEGNEEGRTPHLQGFANFVKKQTFNKVKWYLGARCHIEKAKGTDQQNKEYCSKEGNLLIECGAPRSQGQRSDLSTAVSTLLESGSLVTVAEQHPVTFVRNFRGLAELLKVSGKMQKRDWKTNVHVIVGPPGCGKSKWAANFADPETTYWKPPRNKWWDGYHGEEVVVIDDFYGWLPWDDLLRLCDRYPLTVETKGGTVPFLARSILITSNQTPLEWYSSTAVPAVEALYRRITSLVFWKNATEQSTEEGGQFVTLSPPCPEFPYEINY.

The tract at residues 1 to 29 (MPSKKNGRSGPQPHKRWVFTLNNPSEDER) is disordered. A Nuclear localization signal motif is present at residues 4-18 (KKNGRSGPQPHKRWV). One can recognise a CRESS-DNA virus Rep endonuclease domain in the interval 11–110 (PQPHKRWVFT…GNLLIECGAP (100 aa)). Positions 18–21 (VFTL) match the RCR-1 motif. A divalent metal cation contacts are provided by Glu-48 and His-57. An RCR-2 motif is present at residues 57 to 59 (HLQ). Tyr-96 (for DNA cleavage activity) is an active-site residue. Residues 96 to 99 (YCSK) carry the RCR-3 motif. Glu-100 contributes to the a divalent metal cation binding site. 174–181 (GPPGCGKS) contributes to the ATP binding site.

This sequence belongs to the nanoviruses/circoviruses replication-associated protein family. Interacts with the capsid protein; this interaction relocates Rep into the nucleus. Requires Mg(2+) as cofactor. Mn(2+) serves as cofactor.

The protein localises to the host nucleus. It carries out the reaction ATP + H2O = ADP + phosphate + H(+). Its function is as follows. Essential for the replication of viral ssDNA. The closed circular ssDNA genome is first converted to a superhelical dsDNA. Rep and/or Rep' binds a specific hairpin at the genome origin of replication. Introduces an endonucleolytic nick within the conserved sequence 5'-AGTATTAC-3' in the intergenic region of the genome, thereby initiating the rolling circle replication (RCR). Following cleavage, binds covalently to the 5'-phosphate of DNA as a tyrosyl ester. The cleavage gives rise to a free 3'-OH that serves as a primer for the cellular DNA polymerase. The polymerase synthesizes the (+) strand DNA by rolling circle mechanism. After one round of replication, a Rep-catalyzed nucleotidyl transfer reaction releases a circular single-stranded virus genome, thereby terminating the replication. Displays origin-specific DNA cleavage, and nucleotidyl transferase. The protein is Replication-associated protein (Rep) of Sus scrofa (Pig).